The following is a 396-amino-acid chain: CCA-adding enzyme (396 aa).

ATP-binding residues include Gly-27 and Arg-30. Residues Gly-27 and Arg-30 each contribute to the CTP site. Mg(2+) contacts are provided by Asp-40 and Asp-42. ATP-binding residues include Arg-111, Asp-154, Arg-157, Arg-160, and Arg-163. Residues Arg-111, Asp-154, Arg-157, Arg-160, and Arg-163 each contribute to the CTP site.

This sequence belongs to the tRNA nucleotidyltransferase/poly(A) polymerase family. Bacterial CCA-adding enzyme type 3 subfamily. Homodimer. The cofactor is Mg(2+).

The enzyme catalyses a tRNA precursor + 2 CTP + ATP = a tRNA with a 3' CCA end + 3 diphosphate. It catalyses the reaction a tRNA with a 3' CCA end + 2 CTP + ATP = a tRNA with a 3' CCACCA end + 3 diphosphate. Catalyzes the addition and repair of the essential 3'-terminal CCA sequence in tRNAs without using a nucleic acid template. Adds these three nucleotides in the order of C, C, and A to the tRNA nucleotide-73, using CTP and ATP as substrates and producing inorganic pyrophosphate. tRNA 3'-terminal CCA addition is required both for tRNA processing and repair. Also involved in tRNA surveillance by mediating tandem CCA addition to generate a CCACCA at the 3' terminus of unstable tRNAs. While stable tRNAs receive only 3'-terminal CCA, unstable tRNAs are marked with CCACCA and rapidly degraded. This Bacillus velezensis (strain DSM 23117 / BGSC 10A6 / LMG 26770 / FZB42) (Bacillus amyloliquefaciens subsp. plantarum) protein is CCA-adding enzyme.